A 482-amino-acid chain; its full sequence is Aspartyl/glutamyl-tRNA(Asn/Gln) amidotransferase subunit B (482 aa).

This sequence belongs to the GatB/GatE family. GatB subfamily. In terms of assembly, heterotrimer of A, B and C subunits.

The catalysed reaction is L-glutamyl-tRNA(Gln) + L-glutamine + ATP + H2O = L-glutaminyl-tRNA(Gln) + L-glutamate + ADP + phosphate + H(+). It carries out the reaction L-aspartyl-tRNA(Asn) + L-glutamine + ATP + H2O = L-asparaginyl-tRNA(Asn) + L-glutamate + ADP + phosphate + 2 H(+). Allows the formation of correctly charged Asn-tRNA(Asn) or Gln-tRNA(Gln) through the transamidation of misacylated Asp-tRNA(Asn) or Glu-tRNA(Gln) in organisms which lack either or both of asparaginyl-tRNA or glutaminyl-tRNA synthetases. The reaction takes place in the presence of glutamine and ATP through an activated phospho-Asp-tRNA(Asn) or phospho-Glu-tRNA(Gln). The polypeptide is Aspartyl/glutamyl-tRNA(Asn/Gln) amidotransferase subunit B (Ehrlichia canis (strain Jake)).